The chain runs to 226 residues: Small ribosomal subunit protein uS2c (226 aa).

This sequence belongs to the universal ribosomal protein uS2 family.

The protein localises to the plastid. The protein resides in the chloroplast. In Phaeodactylum tricornutum (strain CCAP 1055/1), this protein is Small ribosomal subunit protein uS2c (rps2).